A 545-amino-acid chain; its full sequence is Dual specificity calcium/calmodulin-dependent 3',5'-cyclic nucleotide phosphodiesterase 1A (545 aa).

2 calmodulin-binding regions span residues 24–44 and 114–137; these read TEKM…QLEK and EKPK…MYRK. The region spanning 142-522 is the PDEase domain; that stretch reads VGLTYPAAVI…ERWKELAAQG (381 aa). The Proton donor role is filled by H219. Zn(2+)-binding residues include H223, H259, D260, and D366. A Mg(2+)-binding site is contributed by D260. Residues 526–545 are disordered; that stretch reads LHKNSEELGNTEEKHADTRP.

It belongs to the cyclic nucleotide phosphodiesterase family. PDE1 subfamily. In terms of assembly, homodimer. Interacts with YWHAZ. Zn(2+) is required as a cofactor. Requires Mg(2+) as cofactor. Expressed in brain, kidney and testis.

It is found in the cell projection. It localises to the cilium. Its subcellular location is the flagellum. It catalyses the reaction a nucleoside 3',5'-cyclic phosphate + H2O = a nucleoside 5'-phosphate + H(+). It carries out the reaction 3',5'-cyclic GMP + H2O = GMP + H(+). The enzyme catalyses 3',5'-cyclic AMP + H2O = AMP + H(+). With respect to regulation, type I PDE are activated by the binding of calmodulin in the presence of Ca(2+). Its activity is regulated as follows. Activated by the binding of calmodulin in the presence of Ca(2+). Functionally, calcium/calmodulin-dependent cyclic nucleotide phosphodiesterase with a dual specificity for the second messengers cGMP and cAMP, which are key regulators of many important physiological processes. Has a higher efficiency with cGMP compared to cAMP. This is Dual specificity calcium/calmodulin-dependent 3',5'-cyclic nucleotide phosphodiesterase 1A from Mus musculus (Mouse).